Here is a 533-residue protein sequence, read N- to C-terminus: Tyrosinase (533 aa).

The signal sequence occupies residues 1 to 18; it reads MFLAVLYCLLWSFQISDG. At 19–476 the chain is on the lumenal, melanosome side; that stretch reads HFPRACASSK…YLEQASRIWP (458 aa). N-linked (GlcNAc...) asparagine glycans are attached at residues Asn86, Asn111, and Asn161. Positions 180, 202, and 211 each coordinate Cu cation. Asn230 and Asn337 each carry an N-linked (GlcNAc...) asparagine glycan. Positions 363 and 367 each coordinate Cu cation. N-linked (GlcNAc...) asparagine glycosylation is present at Asn371. His390 serves as a coordination point for Cu cation. Residues 477–497 form a helical membrane-spanning segment; it reads WLLGAALVGAVIAAALSGLSS. The Cytoplasmic segment spans residues 498 to 533; sequence RLCLQKKKKKKQPQEERQPLLMDKDDYHSLLYQSHL.

Belongs to the tyrosinase family. In terms of assembly, forms an OPN3-dependent complex with DCT in response to blue light in melanocytes. The cofactor is Cu(2+). Post-translationally, glycosylated. As to expression, expressed in the skin.

It is found in the melanosome membrane. It localises to the melanosome. It catalyses the reaction 2 L-dopa + O2 = 2 L-dopaquinone + 2 H2O. The enzyme catalyses L-tyrosine + O2 = L-dopaquinone + H2O. It carries out the reaction 2 5,6-dihydroxyindole-2-carboxylate + O2 = 2 indole-5,6-quinone-2-carboxylate + 2 H2O. This is a copper-containing oxidase that functions in the formation of pigments such as melanins and other polyphenolic compounds. Catalyzes the initial and rate limiting step in the cascade of reactions leading to melanin production from tyrosine. In addition to hydroxylating tyrosine to DOPA (3,4-dihydroxyphenylalanine), also catalyzes the oxidation of DOPA to DOPA-quinone, and possibly the oxidation of DHI (5,6-dihydroxyindole) to indole-5,6 quinone. This is Tyrosinase (Tyr) from Mus musculus (Mouse).